Reading from the N-terminus, the 162-residue chain is MASAENLYQEKMQELQKQMNKVMQTINNHSKVEAFLNSPFGQYLDQHPFVTLSLLVFISLSAVPVGIFLTLIAGTAIAVCLAVLIIEGIVISVGGIALLCILCGLAVMSLGVAAVLCVSYVAGSSVLNYIHAYRVTVGTRGRSGPISLNHETTTAEKSYRSS.

The Cytoplasmic segment spans residues 1-42; it reads MASAENLYQEKMQELQKQMNKVMQTINNHSKVEAFLNSPFGQ. The helical transmembrane segment at 43-63 threads the bilayer; sequence YLDQHPFVTLSLLVFISLSAV. Residues 64–65 are Lumenal-facing; sequence PV. The chain crosses the membrane as a helical span at residues 66–86; it reads GIFLTLIAGTAIAVCLAVLII. Glutamate 87 is a topological domain (cytoplasmic). The chain crosses the membrane as a helical span at residues 88 to 108; sequence GIVISVGGIALLCILCGLAVM. Position 109 (serine 109) is a topological domain, lumenal. A helical membrane pass occupies residues 110 to 130; it reads LGVAAVLCVSYVAGSSVLNYI. The Cytoplasmic segment spans residues 131-162; that stretch reads HAYRVTVGTRGRSGPISLNHETTTAEKSYRSS.

It belongs to the LDAF1 family.

It localises to the endoplasmic reticulum membrane. Its subcellular location is the lipid droplet. Its function is as follows. Plays an important role in the formation of lipid droplets (LD) which are storage organelles at the center of lipid and energy homeostasis. This Xenopus laevis (African clawed frog) protein is Lipid droplet assembly factor 1-A.